The chain runs to 81 residues: Large ribosomal subunit protein bL27 (81 aa).

Residues 1–11 are compositionally biased toward polar residues; the sequence is MATSKSGGSSK. Residues 1-24 form a disordered region; that stretch reads MATSKSGGSSKNGRDSISKRLGVK.

The protein belongs to the bacterial ribosomal protein bL27 family.

This Borrelia duttonii (strain Ly) protein is Large ribosomal subunit protein bL27.